The primary structure comprises 354 residues: Carbamoyl phosphate synthase small chain (354 aa).

The tract at residues 1–167 is CPSase; sequence MEAVLILEDG…KEPKIHKTAN (167 aa). Residues Ser45, Gly219, and Gly221 each coordinate L-glutamine. In terms of domain architecture, Glutamine amidotransferase type-1 spans 171-354; it reads RCVLIDCGVK…DEMIKLKDRK (184 aa). Catalysis depends on Cys246, which acts as the Nucleophile. L-glutamine is bound by residues Leu247, Gln250, Asn288, Gly290, and Phe291. Residues His330 and Glu332 contribute to the active site.

The protein belongs to the CarA family. In terms of assembly, composed of two chains; the small (or glutamine) chain promotes the hydrolysis of glutamine to ammonia, which is used by the large (or ammonia) chain to synthesize carbamoyl phosphate. Tetramer of heterodimers (alpha,beta)4.

The enzyme catalyses hydrogencarbonate + L-glutamine + 2 ATP + H2O = carbamoyl phosphate + L-glutamate + 2 ADP + phosphate + 2 H(+). It catalyses the reaction L-glutamine + H2O = L-glutamate + NH4(+). It participates in amino-acid biosynthesis; L-arginine biosynthesis; carbamoyl phosphate from bicarbonate: step 1/1. It functions in the pathway pyrimidine metabolism; UMP biosynthesis via de novo pathway; (S)-dihydroorotate from bicarbonate: step 1/3. Small subunit of the glutamine-dependent carbamoyl phosphate synthetase (CPSase). CPSase catalyzes the formation of carbamoyl phosphate from the ammonia moiety of glutamine, carbonate, and phosphate donated by ATP, constituting the first step of 2 biosynthetic pathways, one leading to arginine and/or urea and the other to pyrimidine nucleotides. The small subunit (glutamine amidotransferase) binds and cleaves glutamine to supply the large subunit with the substrate ammonia. The protein is Carbamoyl phosphate synthase small chain of Methanocaldococcus jannaschii (strain ATCC 43067 / DSM 2661 / JAL-1 / JCM 10045 / NBRC 100440) (Methanococcus jannaschii).